The primary structure comprises 415 residues: Glutamate-1-semialdehyde 2,1-aminomutase (415 aa).

Position 260 is an N6-(pyridoxal phosphate)lysine (Lys260).

It belongs to the class-III pyridoxal-phosphate-dependent aminotransferase family. HemL subfamily. Pyridoxal 5'-phosphate serves as cofactor.

It is found in the cytoplasm. It catalyses the reaction (S)-4-amino-5-oxopentanoate = 5-aminolevulinate. It participates in porphyrin-containing compound metabolism; protoporphyrin-IX biosynthesis; 5-aminolevulinate from L-glutamyl-tRNA(Glu): step 2/2. The protein is Glutamate-1-semialdehyde 2,1-aminomutase of Methanoculleus marisnigri (strain ATCC 35101 / DSM 1498 / JR1).